A 54-amino-acid polypeptide reads, in one-letter code: Ovomucoid (54 aa).

The Kazal-like domain maps to 4–54 (VDCSGYPQSACPQDYVPFCGSDNKTYSNKCNFCNAVADSNGTLTLSHFGKC). 3 disulfide bridges follow: cysteine 6/cysteine 36, cysteine 14/cysteine 33, and cysteine 22/cysteine 54. The N-linked (GlcNAc...) asparagine glycan is linked to asparagine 43.

Its subcellular location is the secreted. The protein is Ovomucoid of Gallirallus australis (Weka).